The primary structure comprises 416 residues: NADH-quinone oxidoreductase subunit D (416 aa).

The protein belongs to the complex I 49 kDa subunit family. In terms of assembly, NDH-1 is composed of 14 different subunits. Subunits NuoB, C, D, E, F, and G constitute the peripheral sector of the complex.

The protein resides in the cell inner membrane. The enzyme catalyses a quinone + NADH + 5 H(+)(in) = a quinol + NAD(+) + 4 H(+)(out). Its function is as follows. NDH-1 shuttles electrons from NADH, via FMN and iron-sulfur (Fe-S) centers, to quinones in the respiratory chain. The immediate electron acceptor for the enzyme in this species is believed to be ubiquinone. Couples the redox reaction to proton translocation (for every two electrons transferred, four hydrogen ions are translocated across the cytoplasmic membrane), and thus conserves the redox energy in a proton gradient. The protein is NADH-quinone oxidoreductase subunit D of Caulobacter sp. (strain K31).